Reading from the N-terminus, the 508-residue chain is Drug efflux pump JefA (508 aa).

Transmembrane regions (helical) follow at residues 9–29 (VLATGLGIFMVFVDVNIVNVA), 46–66 (WAVAGYSLGMAAVLMSCALLG), 75–95 (FVFGVTLFVVSSIVCVLPVSL), 104–124 (IQGLGAAFISVLSLALLSHSF), 136–156 (NWMAIGMVGAASAPALGGLMV), 163–183 (SVFLVNVPLGAIVWLLTLVGV), 194–214 (LDWVGQLTLIPAVALIAYTII), 222–242 (QSAGFVAALLLAAGVLLWLFV), 265–285 (SVLIVYFVVMSCFFGTLMVIT), 297–317 (LHAGLMMLPVPAGFGVASLLA), 328–348 (LPVLTCLAAMFIGLAIFAISM), 354–374 (VALVGLTIFGAGAGGCATPLL), 399–419 (LGGIFGVAFLGTIVAAWLGAA), and 479–499 (GIKLALGGAAVLLTGAFVLGW).

Belongs to the major facilitator superfamily.

It is found in the cell inner membrane. In terms of biological role, involved in resistance to ethambutol and isoniazid. This chain is Drug efflux pump JefA, found in Mycobacterium tuberculosis (strain CDC 1551 / Oshkosh).